The following is a 79-amino-acid chain: Short neurotoxin 4 (79 aa).

A signal peptide spans 1-21; it reads MKTLLLTLVMVTIMCLDLGYT. 3 disulfide bridges follow: Cys-24/Cys-41, Cys-34/Cys-59, and Cys-63/Cys-71.

It belongs to the three-finger toxin family. Short-chain subfamily. Type III alpha-neurotoxin sub-subfamily. In terms of tissue distribution, expressed by the venom gland.

Its subcellular location is the secreted. Functionally, binds with high affinity to muscle nicotinic acetylcholine receptor (nAChR) and hinders acetylcholine binding to the receptor, thereby impairing neuromuscular transmission. Causes muscle paralysis, spasms and increased respiration. The sequence is that of Short neurotoxin 4 from Pseudonaja textilis (Eastern brown snake).